A 118-amino-acid chain; its full sequence is uncharacterized protein (118 aa).

This sequence to S.pombe tam6.

The protein localises to the mitochondrion. This is an uncharacterized protein from Saccharomyces cerevisiae (strain ATCC 204508 / S288c) (Baker's yeast).